The primary structure comprises 282 residues: Biotin synthase (282 aa).

The 228-residue stretch at 1-228 (MQEIFLCSIS…NARLMVAGGR (228 aa)) folds into the Radical SAM core domain. Residues Cys-17, Cys-21, and Cys-24 each contribute to the [4Fe-4S] cluster site. Residues Cys-61, Cys-96, Cys-154, and Arg-221 each coordinate [2Fe-2S] cluster.

Belongs to the radical SAM superfamily. Biotin synthase family. Homodimer. The cofactor is [4Fe-4S] cluster. Requires [2Fe-2S] cluster as cofactor.

The enzyme catalyses (4R,5S)-dethiobiotin + (sulfur carrier)-SH + 2 reduced [2Fe-2S]-[ferredoxin] + 2 S-adenosyl-L-methionine = (sulfur carrier)-H + biotin + 2 5'-deoxyadenosine + 2 L-methionine + 2 oxidized [2Fe-2S]-[ferredoxin]. Its pathway is cofactor biosynthesis; biotin biosynthesis; biotin from 7,8-diaminononanoate: step 2/2. Catalyzes the conversion of dethiobiotin (DTB) to biotin by the insertion of a sulfur atom into dethiobiotin via a radical-based mechanism. This Helicobacter pylori (strain ATCC 700392 / 26695) (Campylobacter pylori) protein is Biotin synthase.